The following is a 506-amino-acid chain: Chromosomal replication initiator protein DnaA (506 aa).

The segment at 1 to 87 (MSVELWQQCV…IGSRRSSAPR (87 aa)) is domain I, interacts with DnaA modulators. The segment at 87-169 (RAAPNAPVSA…QVEGALKHTS (83 aa)) is domain II. The segment at 135–154 (DSFDAMAEPAAAPPSGGGRA) is disordered. The span at 139–148 (AMAEPAAAPP) shows a compositional bias: low complexity. A domain III, AAA+ region region spans residues 170 to 386 (YLNRTFTFDT…GALKRVIAHS (217 aa)). Residues Gly-214, Gly-216, Lys-217, and Thr-218 each contribute to the ATP site. The interval 387–506 (HFMGRDITIE…YKNLLRTLTT (120 aa)) is domain IV, binds dsDNA.

This sequence belongs to the DnaA family. As to quaternary structure, oligomerizes as a right-handed, spiral filament on DNA at oriC.

It is found in the cytoplasm. Functionally, plays an essential role in the initiation and regulation of chromosomal replication. ATP-DnaA binds to the origin of replication (oriC) to initiate formation of the DNA replication initiation complex once per cell cycle. Binds the DnaA box (a 9 base pair repeat at the origin) and separates the double-stranded (ds)DNA. Forms a right-handed helical filament on oriC DNA; dsDNA binds to the exterior of the filament while single-stranded (ss)DNA is stabiized in the filament's interior. The ATP-DnaA-oriC complex binds and stabilizes one strand of the AT-rich DNA unwinding element (DUE), permitting loading of DNA polymerase. After initiation quickly degrades to an ADP-DnaA complex that is not apt for DNA replication. Binds acidic phospholipids. Non-cooperatively binds DnaA boxes in the minimal plasmid RK2 replication origin (oriV). In vitro in the presence of plasmid RK2-derived TrfA and E.coli protein HU, forms an open complex at oriV. This complex was not however competent for formation of a pre-priming complex with E.coli DnaB and DnaC. Broad host range plasmid RK2 requires not only DnaA for replication but also TrfA and host factors. The chain is Chromosomal replication initiator protein DnaA from Pseudomonas putida (strain ATCC 47054 / DSM 6125 / CFBP 8728 / NCIMB 11950 / KT2440).